A 440-amino-acid polypeptide reads, in one-letter code: Histidinol dehydrogenase (440 aa).

Residues Tyr-139, Gln-201, and Asn-224 each contribute to the NAD(+) site. Ser-247, Gln-269, and His-272 together coordinate substrate. Gln-269 and His-272 together coordinate Zn(2+). Catalysis depends on proton acceptor residues Glu-337 and His-338. 4 residues coordinate substrate: His-338, Asp-371, Glu-425, and His-430. Asp-371 contacts Zn(2+). His-430 lines the Zn(2+) pocket.

Belongs to the histidinol dehydrogenase family. The cofactor is Zn(2+).

The enzyme catalyses L-histidinol + 2 NAD(+) + H2O = L-histidine + 2 NADH + 3 H(+). The protein operates within amino-acid biosynthesis; L-histidine biosynthesis; L-histidine from 5-phospho-alpha-D-ribose 1-diphosphate: step 9/9. In terms of biological role, catalyzes the sequential NAD-dependent oxidations of L-histidinol to L-histidinaldehyde and then to L-histidine. The polypeptide is Histidinol dehydrogenase (Prochlorococcus marinus (strain MIT 9312)).